We begin with the raw amino-acid sequence, 198 residues long: Peroxiredoxin-2 (198 aa).

Residue Ala2 is modified to N-acetylalanine. One can recognise a Thioredoxin domain in the interval 6 to 164; sequence ARIGKPAPDF…ALRLVQAFQY (159 aa). Catalysis depends on Cys51, which acts as the Cysteine sulfenic acid (-SOH) intermediate. Ser112 carries the post-translational modification Phosphoserine. Position 182 is a phosphothreonine (Thr182). An N6-acetyllysine modification is found at Lys196.

Belongs to the peroxiredoxin family. AhpC/Prx1 subfamily. In terms of assembly, homodimer; disulfide-linked, upon oxidation. 5 homodimers assemble to form a ring-like decamer. Interacts with TIPIN. The enzyme can be inactivated by further oxidation of the cysteine sulfenic acid (C(P)-SOH) to sulphinic acid (C(P)-SO2H) instead of its condensation to a disulfide bond. It can be reactivated by forming a transient disulfide bond with sulfiredoxin SRXN1, which reduces the cysteine sulfinic acid in an ATP- and Mg-dependent manner. Post-translationally, acetylation increases resistance to transition to high molecular-mass complexes. Deacetylated by HDAC6 which decreases reducing activity.

The protein localises to the cytoplasm. It catalyses the reaction a hydroperoxide + [thioredoxin]-dithiol = an alcohol + [thioredoxin]-disulfide + H2O. Thiol-specific peroxidase that catalyzes the reduction of hydrogen peroxide and organic hydroperoxides to water and alcohols, respectively. Plays a role in cell protection against oxidative stress by detoxifying peroxides and as sensor of hydrogen peroxide-mediated signaling events. Might participate in the signaling cascades of growth factors and tumor necrosis factor-alpha by regulating the intracellular concentrations of H(2)O(2). This chain is Peroxiredoxin-2 (PRDX2), found in Macaca fascicularis (Crab-eating macaque).